A 76-amino-acid chain; its full sequence is Sec-independent protein translocase protein TatA (76 aa).

Residues 1–21 (MGSFSIWHWLIVLAVVLLLFG) traverse the membrane as a helical segment. A disordered region spans residues 43 to 76 (MSDEDAKDDARDSGRTIDAKADETVNDVKKTTKS). Residues 50 to 76 (DDARDSGRTIDAKADETVNDVKKTTKS) show a composition bias toward basic and acidic residues.

The protein belongs to the TatA/E family. The Tat system comprises two distinct complexes: a TatABC complex, containing multiple copies of TatA, TatB and TatC subunits, and a separate TatA complex, containing only TatA subunits. Substrates initially bind to the TatABC complex, which probably triggers association of the separate TatA complex to form the active translocon.

The protein resides in the cell inner membrane. Part of the twin-arginine translocation (Tat) system that transports large folded proteins containing a characteristic twin-arginine motif in their signal peptide across membranes. TatA could form the protein-conducting channel of the Tat system. The chain is Sec-independent protein translocase protein TatA from Brucella anthropi (strain ATCC 49188 / DSM 6882 / CCUG 24695 / JCM 21032 / LMG 3331 / NBRC 15819 / NCTC 12168 / Alc 37) (Ochrobactrum anthropi).